A 112-amino-acid polypeptide reads, in one-letter code: Ribonuclease P protein component (112 aa).

It belongs to the RnpA family. Consists of a catalytic RNA component (M1 or rnpB) and a protein subunit.

The catalysed reaction is Endonucleolytic cleavage of RNA, removing 5'-extranucleotides from tRNA precursor.. Functionally, RNaseP catalyzes the removal of the 5'-leader sequence from pre-tRNA to produce the mature 5'-terminus. It can also cleave other RNA substrates such as 4.5S RNA. The protein component plays an auxiliary but essential role in vivo by binding to the 5'-leader sequence and broadening the substrate specificity of the ribozyme. In Mycoplasmopsis synoviae (strain 53) (Mycoplasma synoviae), this protein is Ribonuclease P protein component.